Reading from the N-terminus, the 188-residue chain is Threonylcarbamoyl-AMP synthase (188 aa).

The region spanning 3-188 (QLHPSDIKDI…RSGKILRNGQ (186 aa)) is the YrdC-like domain.

Belongs to the SUA5 family. TsaC subfamily.

Its subcellular location is the cytoplasm. It carries out the reaction L-threonine + hydrogencarbonate + ATP = L-threonylcarbamoyladenylate + diphosphate + H2O. Functionally, required for the formation of a threonylcarbamoyl group on adenosine at position 37 (t(6)A37) in tRNAs that read codons beginning with adenine. Catalyzes the conversion of L-threonine, HCO(3)(-)/CO(2) and ATP to give threonylcarbamoyl-AMP (TC-AMP) as the acyladenylate intermediate, with the release of diphosphate. The sequence is that of Threonylcarbamoyl-AMP synthase from Shewanella baltica (strain OS195).